Reading from the N-terminus, the 276-residue chain is Large ribosomal subunit protein uL2 (276 aa).

2 disordered regions span residues 36–55 (PLPRKAGRNNQGKLTVRHRG) and 219–276 (TVRG…GRKK). Over residues 255–276 (LGKKTRKKKNRSNKLIVRGRKK) the composition is skewed to basic residues.

The protein belongs to the universal ribosomal protein uL2 family. Part of the 50S ribosomal subunit. Forms a bridge to the 30S subunit in the 70S ribosome.

Its function is as follows. One of the primary rRNA binding proteins. Required for association of the 30S and 50S subunits to form the 70S ribosome, for tRNA binding and peptide bond formation. It has been suggested to have peptidyltransferase activity; this is somewhat controversial. Makes several contacts with the 16S rRNA in the 70S ribosome. The polypeptide is Large ribosomal subunit protein uL2 (Macrococcus caseolyticus (strain JCSC5402) (Macrococcoides caseolyticum)).